We begin with the raw amino-acid sequence, 447 residues long: Sporulation protein YpeB (447 aa).

Belongs to the YpeB family.

In terms of biological role, required for spore cortex hydrolysis during germination. Appears to be required for either expression, localization, activation or function of SleB. This chain is Sporulation protein YpeB, found in Halalkalibacterium halodurans (strain ATCC BAA-125 / DSM 18197 / FERM 7344 / JCM 9153 / C-125) (Bacillus halodurans).